Reading from the N-terminus, the 310-residue chain is Fatty acid elongase 1 (310 aa).

At 1–63 (MVSDWKNFCL…VGKQPLSEPR (63 aa)) the chain is on the lumenal side. The chain crosses the membrane as a helical span at residues 64 to 84 (PVLLFIAMYYVVIFGGRSLVK). The Cytoplasmic portion of the chain corresponds to 85 to 100 (SCKPLKLRFISQVHNL). A helical transmembrane segment spans residues 101–121 (MLTSVSFLWLILMVEQMLPIV). At 122–141 (YRHGLYFAVCNVESWTQPME) the chain is on the lumenal side. Residues 142-163 (TLYYLNYMTKFVEFADTVLMVL) form a helical membrane-spanning segment. Residues 164–174 (KHRKLTFLHTY) lie on the Cytoplasmic side of the membrane. Positions 172 to 176 (HTYHH) match the HxxHH motif motif. Residues 175–196 (HHGATALLCYNQLVGYTAVTWV) traverse the membrane as a helical segment. The Lumenal portion of the chain corresponds to 197 to 201 (PVTLN). The chain crosses the membrane as a helical span at residues 202-223 (LAVHVLMYWYYFLSASGIRVWW). At 224-234 (KAWVTRLQIVQ) the chain is on the cytoplasmic side. The helical transmembrane segment at 235–255 (FMLDLIVVYYVLYQKIVAAYF) threads the bilayer. Topologically, residues 256–271 (KNACTPQCEDCLGSMT) are lumenal. Residues 272–292 (AIAAGAAILTSYLFLFISFYI) form a helical membrane-spanning segment. At 293-310 (EVYKRGSASGKKKINKNN) the chain is on the cytoplasmic side. The Di-lysine motif motif lies at 304–307 (KKIN).

Belongs to the ELO family.

The protein resides in the endoplasmic reticulum membrane. The enzyme catalyses a very-long-chain acyl-CoA + malonyl-CoA + H(+) = a very-long-chain 3-oxoacyl-CoA + CO2 + CoA. It carries out the reaction tetradecanoyl-CoA + malonyl-CoA + H(+) = 3-oxohexadecanoyl-CoA + CO2 + CoA. It catalyses the reaction (9Z)-tetradecenoyl-CoA + malonyl-CoA + H(+) = 3-oxo-(11Z)-hexadecenoyl-CoA + CO2 + CoA. In terms of biological role, component of a microsomal membrane bound medium-chain fatty acid elongation system, which extends medium-chain-length fatty acids to long-chain fatty acids. Component of elongase I, which extends 12-16-carbon fatty acyl-CoAs such as lauroyl-CoA to 14-18-carbon fatty acids by incorporation of malonyl-CoA. In Saccharomyces cerevisiae (strain ATCC 204508 / S288c) (Baker's yeast), this protein is Fatty acid elongase 1.